Reading from the N-terminus, the 106-residue chain is Cytochrome c (106 aa).

Residues C17, C20, and H21 each coordinate heme c. K75 bears the N6,N6,N6-trimethyllysine mark. M83 is a heme c binding site.

It belongs to the cytochrome c family. Binds 1 heme c group covalently per subunit.

It is found in the mitochondrion intermembrane space. In terms of biological role, electron carrier protein. The oxidized form of the cytochrome c heme group can accept an electron from the heme group of the cytochrome c1 subunit of cytochrome reductase. Cytochrome c then transfers this electron to the cytochrome oxidase complex, the final protein carrier in the mitochondrial electron-transport chain. The protein is Cytochrome c (CYC1) of Gibberella zeae (strain ATCC MYA-4620 / CBS 123657 / FGSC 9075 / NRRL 31084 / PH-1) (Wheat head blight fungus).